Here is a 105-residue protein sequence, read N- to C-terminus: MIKYVLISALLVVAVYSFTIEDNEDALLEEAEDELDTEEERRMALPPGAVCNGHKSDCQCFGAKYECSCPFLWRFRRSAKCHCKKGWAWTAVKKRSCHNRYQWSG.

Residues 1-17 form the signal peptide; that stretch reads MIKYVLISALLVVAVYS. Residues 18–41 constitute a propeptide that is removed on maturation; that stretch reads FTIEDNEDALLEEAEDELDTEEER. Disulfide bonds link C51–C67, C58–C97, C60–C83, and C69–C81.

This sequence belongs to the neurotoxin 04 (omega-agtx) family. 01 (type I omega-agtx) subfamily. As to expression, expressed by the venom gland.

Its subcellular location is the secreted. Its function is as follows. Insecticidal to house crickets. It induces an excitatory slow-onset impact that leads to irreversible spastic paralysis. It also modifies human voltage-gated potassium channel Kv1.5/KCNA5. Most likely, it binds to the voltage-sensing domain of the channel, suggesting it does not block the pore but prevents its opening at physiological membrane potentials. The recombinant peptide binds to the channel in an irreversible manner and slows down the hKv1.5 current activation kinetics. It is not toxic to mice, when intracranially injected (at 0.5 ug/g mouse). The polypeptide is U2-lycotoxin-Ls1d (Lycosa singoriensis (Wolf spider)).